The chain runs to 836 residues: Ethylene receptor 3 (836 aa).

3 helical membrane-spanning segments follow: residues 137–157 (LIAA…AGLR), 166–186 (LVQF…TAFT), and 204–224 (LTAL…PQLL). Residues C176 and H180 each coordinate Cu cation. The GAF domain maps to 269–413 (DRHTVLYTTL…VVAGQVAVAL (145 aa)). Residues 416-452 (ATLLEESRAMRDRLAEQNRELLQARRDALMANEARQA) adopt a coiled-coil conformation. One can recognise a Histidine kinase domain in the interval 457–691 (MSQGMRRPIH…LVLRFQLQSP (235 aa)). The region spanning 718-834 (LLIDDDDDIN…LKDELARILQ (117 aa)) is the Response regulatory domain.

Belongs to the ethylene receptor family. It depends on Cu cation as a cofactor.

Its subcellular location is the endoplasmic reticulum membrane. The catalysed reaction is ATP + protein L-histidine = ADP + protein N-phospho-L-histidine.. Ethylene receptor related to bacterial two-component regulators. Acts as a negative regulator of ethylene signaling. May delay the transition from the vegetative stage to the floral stage by up-regulating GI (GIGANTEA) and RCN1 and cause starch accumulation in stems by down-regulating the alpha-amylase AMY3D. This chain is Ethylene receptor 3, found in Oryza sativa subsp. indica (Rice).